The sequence spans 269 residues: 4-hydroxy-tetrahydrodipicolinate reductase (269 aa).

Residues 8-13 (GAAGRM) and Glu-34 each bind NAD(+). Position 35 (Arg-35) interacts with NADP(+). Residues 98 to 100 (GTT) and 122 to 125 (APNY) each bind NAD(+). His-155 acts as the Proton donor/acceptor in catalysis. His-156 serves as a coordination point for (S)-2,3,4,5-tetrahydrodipicolinate. Lys-159 (proton donor) is an active-site residue. 165 to 166 (GT) lines the (S)-2,3,4,5-tetrahydrodipicolinate pocket.

This sequence belongs to the DapB family.

Its subcellular location is the cytoplasm. It catalyses the reaction (S)-2,3,4,5-tetrahydrodipicolinate + NAD(+) + H2O = (2S,4S)-4-hydroxy-2,3,4,5-tetrahydrodipicolinate + NADH + H(+). The catalysed reaction is (S)-2,3,4,5-tetrahydrodipicolinate + NADP(+) + H2O = (2S,4S)-4-hydroxy-2,3,4,5-tetrahydrodipicolinate + NADPH + H(+). It functions in the pathway amino-acid biosynthesis; L-lysine biosynthesis via DAP pathway; (S)-tetrahydrodipicolinate from L-aspartate: step 4/4. Catalyzes the conversion of 4-hydroxy-tetrahydrodipicolinate (HTPA) to tetrahydrodipicolinate. The protein is 4-hydroxy-tetrahydrodipicolinate reductase of Vibrio parahaemolyticus serotype O3:K6 (strain RIMD 2210633).